The following is a 204-amino-acid chain: MIGRLQGILLEKQPPEILLNVQGVGYELLLPMTSFYDLPEIGQETTLFTHLVVREDAHLLFGFAQKTDRTLFRELIKTNGVGPKLALAILSAMSVEQFAYAIEREELSKLTKIPGVGKKTAERLLVELKGKFKGVKQSDFFVESTHIPLSPSIESHSESSSDEAISALIALGYKPAEAEKMVKRVAKPELTSEQVIREALKAAL.

A domain I region spans residues 1 to 64; sequence MIGRLQGILL…EDAHLLFGFA (64 aa). The tract at residues 65–143 is domain II; sequence QKTDRTLFRE…GVKQSDFFVE (79 aa). A flexible linker region spans residues 144 to 155; sequence STHIPLSPSIES. The interval 156-204 is domain III; it reads HSESSSDEAISALIALGYKPAEAEKMVKRVAKPELTSEQVIREALKAAL.

This sequence belongs to the RuvA family. As to quaternary structure, homotetramer. Forms an RuvA(8)-RuvB(12)-Holliday junction (HJ) complex. HJ DNA is sandwiched between 2 RuvA tetramers; dsDNA enters through RuvA and exits via RuvB. An RuvB hexamer assembles on each DNA strand where it exits the tetramer. Each RuvB hexamer is contacted by two RuvA subunits (via domain III) on 2 adjacent RuvB subunits; this complex drives branch migration. In the full resolvosome a probable DNA-RuvA(4)-RuvB(12)-RuvC(2) complex forms which resolves the HJ.

Its subcellular location is the cytoplasm. Functionally, the RuvA-RuvB-RuvC complex processes Holliday junction (HJ) DNA during genetic recombination and DNA repair, while the RuvA-RuvB complex plays an important role in the rescue of blocked DNA replication forks via replication fork reversal (RFR). RuvA specifically binds to HJ cruciform DNA, conferring on it an open structure. The RuvB hexamer acts as an ATP-dependent pump, pulling dsDNA into and through the RuvAB complex. HJ branch migration allows RuvC to scan DNA until it finds its consensus sequence, where it cleaves and resolves the cruciform DNA. This Haemophilus influenzae (strain PittGG) protein is Holliday junction branch migration complex subunit RuvA.